A 102-amino-acid polypeptide reads, in one-letter code: Acid shock protein (102 aa).

Residues 1–21 (MKKVLALVVAAAMGLSSAAFA) form the signal peptide. Positions 22 to 41 (AETATTPAPTATTTKAAPAK) are enriched in low complexity. The propeptide occupies 22–58 (AETATTPAPTATTTKAAPAKTTHHKKQHKAAPAQKAQ). The segment at 22–102 (AETATTPAPT…PAKPAAQPAA (81 aa)) is disordered. Basic residues predominate over residues 80–90 (AAKKHAKKHSH). Positions 91–102 (QQPAKPAAQPAA) are enriched in low complexity.

Belongs to the Asr family. Proteolytic processing gives rise to the active protein.

It is found in the periplasm. Its function is as follows. Required for growth and/or survival at acidic conditions. This chain is Acid shock protein, found in Escherichia coli O45:K1 (strain S88 / ExPEC).